The sequence spans 967 residues: Leucine-rich repeat receptor-like protein kinase PXC2 (967 aa).

A signal peptide spans 1 to 20; the sequence is MFNGAVSLLFLFLAVVSARA. The Extracellular portion of the chain corresponds to 21 to 609; that stretch reads DPTFNDDVLG…QIRKSVLSIS (589 aa). 11 LRR repeats span residues 91–114, 115–139, 141–164, 165–189, 191–212, 214–236, 237–260, 262–284, 285–307, 308–332, and 334–356; these read LQFLHTLVLSNNNLTGTLNPEFPH, LGSLQVVDFSGNNLSGRIPDGFFEQ, GSLRSVSLANNKLTGSIPVSLSYC, STLTHLNLSSNQLSGRLPRDIWFLK, LKSLDFSHNFLQGDIPDGLGGL, DLRHINLSRNWFSGDVPSDIGRC, SSLKSLDLSENYFSGNLPDSMKSL, SCSSIRLRGNSLIGEIPDWIGDI, ATLEILDLSANNFTGTVPFSLGN, LEFLKDLNLSANMLAGELPQTLSNC, and NLISIDVSKNSFTGDVLKWMFTG. N-linked (GlcNAc...) asparagine glycosylation is found at Asn-103 and Asn-127. An N-linked (GlcNAc...) asparagine glycan is attached at Asn-171. An N-linked (GlcNAc...) asparagine glycan is attached at Asn-219. Asn-296, Asn-315, and Asn-331 each carry an N-linked (GlcNAc...) asparagine glycan. An N-linked (GlcNAc...) asparagine glycan is attached at Asn-374. 7 LRR repeats span residues 384 to 408, 410 to 432, 433 to 456, 457 to 480, 482 to 503, 504 to 528, and 530 to 552; these read LQGLRVLDLSSNGFTGELPSNIWIL, SLLQLNMSTNSLFGSIPTGIGGL, KVAEILDLSSNLLNGTLPSEIGGA, VSLKQLHLHRNRLSGQIPAKISNC, ALNTINLSENELSGAIPGSIGS, LSNLEYIDLSRNNLSGSLPKEIEKL, and HLLTFNISHNNITGELPAGGFFN. N-linked (GlcNAc...) asparagine glycosylation is found at Asn-415, Asn-446, Asn-479, Asn-487, Asn-516, Asn-535, Asn-540, Asn-571, and Asn-587. The helical transmembrane segment at 610 to 630 threads the bilayer; it reads ALIAIGAAAVIAIGVVAVTLL. At 631 to 967 the chain is on the cytoplasmic side; that stretch reads NVHARSSVSR…LIQCPSHDLE (337 aa). The region spanning 687 to 959 is the Protein kinase domain; it reads LNKDSELGRG…EEVVKILELI (273 aa). ATP contacts are provided by residues 693–701 and Lys-715; that span reads LGRGGFGVV.

This sequence belongs to the protein kinase superfamily. Ser/Thr protein kinase family. In terms of tissue distribution, expressed in the vascular strands of cotyledons, the shoot apex, hypocotyls, roots, leaves, stems and flowers.

The protein localises to the cell membrane. Its function is as follows. Leucine-rich repeat receptor-like protein kinase that may play a role in vascular tissues development. In Arabidopsis thaliana (Mouse-ear cress), this protein is Leucine-rich repeat receptor-like protein kinase PXC2.